The primary structure comprises 353 residues: Abasic site processing protein HMCES (353 aa).

Cys2 (nucleophile) is an active-site residue. A Thiazolidine linkage to a ring-opened DNA abasic site modification is found at Cys2. Residue Glu127 is part of the active site. Glycyl lysine isopeptide (Lys-Gly) (interchain with G-Cter in SUMO2) cross-links involve residues Lys148 and Lys151. Phosphoserine is present on Ser160. Residues Lys274 and Lys275 each participate in a glycyl lysine isopeptide (Lys-Gly) (interchain with G-Cter in SUMO2) cross-link. The disordered stretch occupies residues 292–353 (TKSPKKEVPD…DEPMAKKPNS (62 aa)). At Ser294 the chain carries Phosphoserine. The span at 295–307 (PKKEVPDSPKKDA) shows a compositional bias: basic and acidic residues. A Glycyl lysine isopeptide (Lys-Gly) (interchain with G-Cter in SUMO2) cross-link involves residue Lys305. Ser321 carries the phosphoserine modification. The short motif at 332-338 (SFLDRWL) is the PIP-box element. The segment covering 336–353 (RWLKQEKEDEPMAKKPNS) has biased composition (basic and acidic residues). Residues Lys339 and Lys342 each participate in a glycyl lysine isopeptide (Lys-Gly) (interchain with G-Cter in SUMO2) cross-link.

It belongs to the SOS response-associated peptidase family. In terms of assembly, interacts (via PIP-box motif) with PCNA. In terms of tissue distribution, expressed in embryonic stem cells.

It localises to the chromosome. Its activity is regulated as follows. Formation and reversal of DNA-protein cross-link depends on DNA context. Catalyzes formation of the thiazolidine linkage in presence of abasic sites in single-stranded DNA. Mediates the reversal of the thiazolidine cross-link in presence of double stranded DNA. In terms of biological role, sensor of abasic sites in single-stranded DNA (ssDNA) required to preserve genome integrity by promoting error-free repair of abasic sites. Acts as an enzyme that recognizes and binds abasic sites in ssDNA at replication forks and chemically modifies the lesion by forming a covalent cross-link with DNA: forms a stable thiazolidine linkage between a ring-opened abasic site and the alpha-amino and sulfhydryl substituents of its N-terminal catalytic cysteine residue. Promotes error-free repair by protecting abasic sites from translesion synthesis (TLS) polymerases and endonucleases that are error-prone and would generate mutations and double-strand breaks. The HMCES DNA-protein cross-link is then either reversed or degraded. HMCES is able to catalyze the reversal of its thiazolidine cross-link and cycle between a cross-link and a non-cross-linked state depending on DNA context: mediates self-reversal of the thiazolidine cross-link in double stranded DNA, allowing APEX1 to initiate downstream repair of abasic sites. The HMCES DNA-protein cross-link can also be degraded by the SPRTN metalloprotease following unfolding by the BRIP1/FANCJ helicase. Has preference for ssDNA, but can also accommodate double-stranded DNA with 3' or 5' overhang (dsDNA), and dsDNA-ssDNA 3' junction. Plays a protective role during somatic hypermutation of immunoglobulin genes in B-cells: acts via its ability to form covalent cross-links with abasic sites, thereby limiting the accumulation of deletions in somatic hypermutation target regions. Also involved in class switch recombination (CSR) in B-cells independently of the formation of a DNA-protein cross-link: acts by binding and protecting ssDNA overhangs to promote DNA double-strand break repair through the microhomology-mediated alternative-end-joining (Alt-EJ) pathway. Acts as a protease: mediates autocatalytic processing of its N-terminal methionine in order to expose the catalytic cysteine. The protein is Abasic site processing protein HMCES of Mus musculus (Mouse).